The following is a 305-amino-acid chain: Ribosomal RNA small subunit methyltransferase H (305 aa).

S-adenosyl-L-methionine is bound by residues 47 to 49, D66, F93, D108, and Q115; that span reads GGH.

This sequence belongs to the methyltransferase superfamily. RsmH family.

Its subcellular location is the cytoplasm. The enzyme catalyses cytidine(1402) in 16S rRNA + S-adenosyl-L-methionine = N(4)-methylcytidine(1402) in 16S rRNA + S-adenosyl-L-homocysteine + H(+). In terms of biological role, specifically methylates the N4 position of cytidine in position 1402 (C1402) of 16S rRNA. This chain is Ribosomal RNA small subunit methyltransferase H, found in Prochlorococcus marinus (strain MIT 9211).